The following is a 531-amino-acid chain: PHD finger protein 21B (531 aa).

Disordered stretches follow at residues 79-99 (PDSLPVAPGRDRPPKQPPTFQ), 184-222 (SADNKPPPRLLSSPHPATHHCPLHPSSLPLTPPSPSLSP), 238-277 (VQTQPESTAESRPPTEEPSQGAQATKKKKEDRPPTQENPE), and 295-314 (EIQSKRQERKRRSTANPAYS). A compositionally biased stretch (basic and acidic residues) spans 265–277 (KKEDRPPTQENPE). The PHD-type zinc-finger motif lies at 352–399 (DEHCAACKRGANLQPCGTCPGAYHLSCLEPPLKTAPKGVWVCPRCQQK). Residues 423–465 (KTVKEEEKQKLLQRGSELQNEHQQLEERDRRLASAVQKCLELK) adopt a coiled-coil conformation. Residues 507–531 (LLAGPWTKPSVAATHPTVQHPQGHN) form a disordered region. The segment covering 522–531 (PTVQHPQGHN) has biased composition (polar residues).

The chain is PHD finger protein 21B (PHF21B) from Homo sapiens (Human).